The sequence spans 273 residues: Ethanolamine ammonia-lyase small subunit (273 aa).

3 residues coordinate adenosylcob(III)alamin: Val164, Glu185, and Cys214.

It belongs to the EutC family. The basic unit is a heterodimer which dimerizes to form tetramers. The heterotetramers trimerize; 6 large subunits form a core ring with 6 small subunits projecting outwards. Adenosylcob(III)alamin is required as a cofactor.

Its subcellular location is the bacterial microcompartment. The catalysed reaction is ethanolamine = acetaldehyde + NH4(+). It functions in the pathway amine and polyamine degradation; ethanolamine degradation. Its function is as follows. Catalyzes the deamination of various vicinal amino-alcohols to oxo compounds. Allows this organism to utilize ethanolamine as the sole source of nitrogen and carbon in the presence of external vitamin B12. The chain is Ethanolamine ammonia-lyase small subunit from Pseudomonas aeruginosa (strain UCBPP-PA14).